Consider the following 347-residue polypeptide: UPF0283 membrane protein ECA1987 (347 aa).

Positions 1–11 (MNEPLKPRVTF) are enriched in basic and acidic residues. Residues 1 to 48 (MNEPLKPRVTFDDVSPQEPQPQLRAGLAFDEQSSTPFSPISREEEVPE) are disordered. 3 consecutive transmembrane segments (helical) span residues 70–90 (MVMAGVALFGISALAQGVQSL), 99–119 (WIALGGITAGSLIVAAGVGSL), and 213–233 (ESTLMIAVSPLALVDMAFIAW).

The protein belongs to the UPF0283 family.

The protein localises to the cell inner membrane. This is UPF0283 membrane protein ECA1987 from Pectobacterium atrosepticum (strain SCRI 1043 / ATCC BAA-672) (Erwinia carotovora subsp. atroseptica).